Here is a 246-residue protein sequence, read N- to C-terminus: MPSAPAAPDAAASVAPNPPAALPVTVRWLGETPYDACFDAMRAFTDARTPDTDDEIWVVEHPPVYTLGQAGNPAHLLVADSGVPLVKVDRGGQITYHGPGQIVAYLLVDLRRRKLMVRTLVTRIEEAVIETLAAYNLASARKAGAPGIYVESGPHRGAKIAALGLKIRNGCSYHGLSVNVKMDLRPFLAINPCGYAGLETIDMASLGATADWHEVAQTLVRRLIAHLDGATAAAALPQQALEQSND.

A BPL/LPL catalytic domain is found at 50-231; the sequence is PDTDDEIWVV…RLIAHLDGAT (182 aa). Residues 90-97, 162-164, and 175-177 contribute to the substrate site; these read RGGQITYH, ALG, and GLS. Cysteine 193 (acyl-thioester intermediate) is an active-site residue.

It belongs to the LipB family.

It localises to the cytoplasm. It catalyses the reaction octanoyl-[ACP] + L-lysyl-[protein] = N(6)-octanoyl-L-lysyl-[protein] + holo-[ACP] + H(+). It participates in protein modification; protein lipoylation via endogenous pathway; protein N(6)-(lipoyl)lysine from octanoyl-[acyl-carrier-protein]: step 1/2. In terms of biological role, catalyzes the transfer of endogenously produced octanoic acid from octanoyl-acyl-carrier-protein onto the lipoyl domains of lipoate-dependent enzymes. Lipoyl-ACP can also act as a substrate although octanoyl-ACP is likely to be the physiological substrate. This is Octanoyltransferase from Burkholderia pseudomallei (strain 1106a).